We begin with the raw amino-acid sequence, 365 residues long: Serine/threonine-protein phosphatase 2A activator 1 (365 aa).

The interval 321–349 is disordered; that stretch reads YEAPSETSEKPAAGTAHTTTTTMPPPRMT. A compositionally biased stretch (low complexity) spans 331–342; that stretch reads PAAGTAHTTTTT.

Belongs to the PTPA-type PPIase family.

The protein resides in the cytoplasm. It is found in the nucleus. The catalysed reaction is [protein]-peptidylproline (omega=180) = [protein]-peptidylproline (omega=0). Its function is as follows. PPIases accelerate the folding of proteins. It catalyzes the cis-trans isomerization of proline imidic peptide bonds in oligopeptides. Acts as a regulatory subunit for PP2A-like phosphatases modulating their activity or substrate specificity, probably by inducing a conformational change in the catalytic subunit, a direct target of the PPIase. Can reactivate inactive phosphatase PP2A-phosphatase methylesterase complexes (PP2Ai) in presence of ATP and Mg(2+) by dissociating the inactive form from the complex. This chain is Serine/threonine-protein phosphatase 2A activator 1 (RRD1), found in Eremothecium gossypii (strain ATCC 10895 / CBS 109.51 / FGSC 9923 / NRRL Y-1056) (Yeast).